Here is a 506-residue protein sequence, read N- to C-terminus: Cysteine--tRNA ligase (506 aa).

C34 lines the Zn(2+) pocket. Positions 36–46 (PTVYDFAHIGN) match the 'HIGH' region motif. Zn(2+)-binding residues include C230, H269, and E273. Residues 302–306 (KMSKS) carry the 'KMSKS' region motif. K305 serves as a coordination point for ATP.

The protein belongs to the class-I aminoacyl-tRNA synthetase family. In terms of assembly, monomer. The cofactor is Zn(2+).

The protein resides in the cytoplasm. The catalysed reaction is tRNA(Cys) + L-cysteine + ATP = L-cysteinyl-tRNA(Cys) + AMP + diphosphate. This Brucella suis biovar 1 (strain 1330) protein is Cysteine--tRNA ligase.